A 305-amino-acid chain; its full sequence is tRNA-cytidine(32) 2-sulfurtransferase (305 aa).

The tract at residues 1-20 (MTAVLPLPQPLADPAPRDPR) is disordered. Positions 59-64 (SGGKDS) match the PP-loop motif motif. 3 residues coordinate [4Fe-4S] cluster: Cys-134, Cys-137, and Cys-225. A disordered region spans residues 282-305 (DAPSGLDPDPRAWLSAGHATHDSD).

Belongs to the TtcA family. Homodimer. It depends on Mg(2+) as a cofactor. Requires [4Fe-4S] cluster as cofactor.

It localises to the cytoplasm. The catalysed reaction is cytidine(32) in tRNA + S-sulfanyl-L-cysteinyl-[cysteine desulfurase] + AH2 + ATP = 2-thiocytidine(32) in tRNA + L-cysteinyl-[cysteine desulfurase] + A + AMP + diphosphate + H(+). The protein operates within tRNA modification. Functionally, catalyzes the ATP-dependent 2-thiolation of cytidine in position 32 of tRNA, to form 2-thiocytidine (s(2)C32). The sulfur atoms are provided by the cysteine/cysteine desulfurase (IscS) system. This is tRNA-cytidine(32) 2-sulfurtransferase from Xanthomonas axonopodis pv. citri (strain 306).